Consider the following 210-residue polypeptide: ATP-dependent Clp protease proteolytic subunit (210 aa).

Ser-106 acts as the Nucleophile in catalysis. Residue His-131 is part of the active site.

The protein belongs to the peptidase S14 family. Fourteen ClpP subunits assemble into 2 heptameric rings which stack back to back to give a disk-like structure with a central cavity, resembling the structure of eukaryotic proteasomes.

Its subcellular location is the cytoplasm. The enzyme catalyses Hydrolysis of proteins to small peptides in the presence of ATP and magnesium. alpha-casein is the usual test substrate. In the absence of ATP, only oligopeptides shorter than five residues are hydrolyzed (such as succinyl-Leu-Tyr-|-NHMec, and Leu-Tyr-Leu-|-Tyr-Trp, in which cleavage of the -Tyr-|-Leu- and -Tyr-|-Trp bonds also occurs).. Its function is as follows. Cleaves peptides in various proteins in a process that requires ATP hydrolysis. Has a chymotrypsin-like activity. Plays a major role in the degradation of misfolded proteins. This chain is ATP-dependent Clp protease proteolytic subunit, found in Bartonella quintana (strain Toulouse) (Rochalimaea quintana).